Consider the following 722-residue polypeptide: uncharacterized protein (722 aa).

Catalysis depends on charge relay system residues Ser-575, Asp-658, and His-691.

This sequence belongs to the peptidase S9B family.

This is an uncharacterized protein from Rickettsia prowazekii (strain Madrid E).